Reading from the N-terminus, the 610-residue chain is MWLPLVLFLAVLLLAVVCKVYLGLFSGKSPNPFSEDVKRPPAPLVTDKEARKKVLKQAFSASRVPEKLDVVVIGSGFGGLAAAAILAKAGKRVLVLEQHTKAGGACHTFGENGLEFDTGIHYIGRMEEGSIGRFILDQITEGQLDWVPMSSPFDIMVLEGPNGRKEYPMYSGEKAYIQGLKEKFPQEEAIIDKYIKLVKVVSNGVAHAILLKFLPLPVIQLLDRCGLLTRFSPFLHASTQSLAEVLQQLGASSELQAVLSYIFPTYGVTPRHSAFSMHALLVNHYLKGAFYPRGGSSEIAFHTIPVIQRAGGAVLTRATVQSVLLDSAGKACGVSVKKGHELVNIYCPVVVSNAGLFNTYEHLLPGNARCLPGVKQQLGMVRPGLGMMSVFICLQGTKEDLHLPSTNYYVYHDTDMDQAMERYVSMPREKAAEHIPLLFIAFPSAKDPTWEDRFPGRSSMIMLIPSAYEWFEEWQAELKGKRGSDYETYKNSFVEASMSVAMKLFPQLEGKVESVTAGSPLTNQFYLAAPRGACYGADHDLGRLHPRVMASLRAQSPIPNLYLTGQDIFTCGLVGALQGALLCSSAILKRNLYSDLKDLGSRIQAQKKKN.

An N-terminal signal peptide occupies residues 1-18; sequence MWLPLVLFLAVLLLAVVC.

The protein belongs to the carotenoid/retinoid oxidoreductase family. CrtISO subfamily. Requires NAD(+) as cofactor. The cofactor is NADP(+). It depends on FAD as a cofactor.

The protein resides in the endoplasmic reticulum membrane. It carries out the reaction all-trans-13,14-dihydroretinol + A = all-trans-retinol + AH2. Catalyzes the saturation of all-trans-retinol to all-trans-13,14-dihydroretinol. Does not exhibit any activity toward all-trans-retinoic acid, nor 9-cis, 11-cis or 13-cis-retinol isomers. May play a role in the metabolism of vitamin A. Independently of retinol conversion, may regulate liver metabolism upstream of MLXIPL/ChREBP. May play a role in adipocyte differentiation. This is All-trans-retinol 13,14-reductase (RETSAT) from Macaca fascicularis (Crab-eating macaque).